Reading from the N-terminus, the 426-residue chain is Adenylosuccinate synthetase (426 aa).

GTP is bound by residues 11–17 (GDEGKGK) and 39–41 (GHT). Asp-12 functions as the Proton acceptor in the catalytic mechanism. Mg(2+) contacts are provided by Asp-12 and Gly-39. IMP-binding positions include 12–15 (DEGK), 37–40 (NAGH), Thr-130, Arg-144, Asn-226, Thr-241, and Arg-305. Catalysis depends on His-40, which acts as the Proton donor. 301-307 (VTTGRKR) contacts substrate. Residues Arg-307, 333–335 (KLD), and 415–417 (GTG) contribute to the GTP site.

It belongs to the adenylosuccinate synthetase family. In terms of assembly, homodimer. Mg(2+) serves as cofactor.

The protein localises to the cytoplasm. It carries out the reaction IMP + L-aspartate + GTP = N(6)-(1,2-dicarboxyethyl)-AMP + GDP + phosphate + 2 H(+). The protein operates within purine metabolism; AMP biosynthesis via de novo pathway; AMP from IMP: step 1/2. Functionally, plays an important role in the de novo pathway and in the salvage pathway of purine nucleotide biosynthesis. Catalyzes the first committed step in the biosynthesis of AMP from IMP. This is Adenylosuccinate synthetase from Meyerozyma guilliermondii (strain ATCC 6260 / CBS 566 / DSM 6381 / JCM 1539 / NBRC 10279 / NRRL Y-324) (Yeast).